Consider the following 2442-residue polypeptide: Histone lysine acetyltransferase CREBBP (2442 aa).

2 disordered regions span residues 1–40 (MAEN…ENDL) and 74–168 (RGGS…PATS). Ala2 is subject to N-acetylalanine. Over residues 20–30 (PGFSANDSTDF) the composition is skewed to polar residues. Ser120 carries the post-translational modification Phosphoserine. The span at 125-168 (GDSSTPSLPKQAASTSGPTPPASQALNPQAQKQVGLVTSSPATS) shows a compositional bias: polar residues. At Arg219 the chain carries Omega-N-methylarginine. Residues 226–409 (PAPAMQGATS…GKACQVAHCA (184 aa)) form an interaction with SRCAP region. A compositionally biased stretch (low complexity) spans 261–272 (GGMTKMGMTGNT). The tract at residues 261 to 290 (GGMTKMGMTGNTSPFGQPFSQTGGQPMGAT) is disordered. A compositionally biased stretch (polar residues) spans 273–284 (SPFGQPFSQTGG). Residues 346–432 (DPEKRKLIQQ…RHDCPVCLPL (87 aa)) form a TAZ-type 1 zinc finger. His362, Cys366, Cys379, Cys384, His393, Cys397, Cys403, Cys408, His417, Cys421, Cys426, and Cys429 together coordinate Zn(2+). Residues 586 to 665 (GVRKGWHEHV…KIYKIQKELE (80 aa)) enclose the KIX domain. Arg600 and Arg624 each carry asymmetric dimethylarginine. The residue at position 656 (Lys656) is an N6-acetyllysine. Positions 792-825 (FLPQNQFPSSSGAMSVNSVGMGQPATQAGVSQGQ) are enriched in polar residues. Residues 792 to 1084 (FLPQNQFPSS…STSPSQPRKK (293 aa)) are disordered. Pro residues-rich tracts occupy residues 846-862 (PCPP…PPPA) and 874-887 (PTPP…PAAP). The segment covering 894–906 (VSSGQTPTPTPGS) has biased composition (polar residues). 2 stretches are compositionally biased toward low complexity: residues 909–930 (SAAQ…VTPQ) and 938–957 (PSVA…HTQP). Polar residues predominate over residues 974-989 (PTPSSVTSAETSSQQP). Residue Lys999 forms a Glycyl lysine isopeptide (Lys-Gly) (interchain with G-Cter in SUMO1) linkage. Basic and acidic residues predominate over residues 1012-1022 (AESKGEPRSEM). Lys1015 is subject to N6-acetyllysine. Phosphoserine is present on Ser1031. Basic and acidic residues predominate over residues 1033–1060 (VKEETDTTEQKSEPMEVEEKKPEVKVEA). Glycyl lysine isopeptide (Lys-Gly) (interchain with G-Cter in SUMO1) cross-links involve residues Lys1034 and Lys1057. Residues 1067–1080 (SANGTASQSTSPSQ) are compositionally biased toward polar residues. Ser1077 bears the Phosphoserine mark. One can recognise a Bromo domain in the interval 1086 to 1193 (FKPEELRQAL…EVFEQEIDPV (108 aa)). The tract at residues 1125 to 1171 (DYFDIVKNPMDLSTIKRKLDTGQYQEPWQYVDDVWLMFNNAWLYNRK) is interaction with histone. The segment at 1163–1181 (NNAWLYNRKTSRVYKFCSK) is interaction with ASF1A. Lys1217 carries the N6-acetyllysine modification. Residues 1324-1701 (KFSAKRLQTT…MLVELHTQGQ (378 aa)) enclose the CBP/p300-type HAT domain. Residues Ser1383 and Ser1387 each carry the phosphoserine; by IKKA modification. The segment at 1434-1436 (YLD) is interaction with histone. Residues 1435–1437 (LDS), 1447–1448 (RT), Ile1494, Arg1499, and Trp1503 contribute to the acetyl-CoA site. A coiled-coil region spans residues 1548 to 1575 (NVLEESIKELEQEEEERKKEESTAASET). The segment covering 1557–1569 (LEQEEEERKKEES) has biased composition (basic and acidic residues). The tract at residues 1557–1616 (LEQEEEERKKEESTAASETPEGSQGDSKNAKKKNNKKTNKNKSSISRANKKKPSMPNVSN) is disordered. N6-acetyllysine occurs at positions 1584, 1592, 1593, 1596, and 1598. Residues 1586–1596 (AKKKNNKKTNK) are compositionally biased toward basic residues. The ZZ-type zinc finger occupies 1703–1751 (RFVYTCNECKHHVETRWHCTVCEDYDLCINCYNTKSHTHKMVKWGLGLD). 8 residues coordinate Zn(2+): Cys1708, Cys1711, Cys1721, Cys1724, Cys1730, Cys1733, His1739, and His1741. Lys1742 and Lys1745 each carry N6-acetyllysine. Position 1764 is a phosphoserine (Ser1764). Residues 1766–1847 (QESRRLSIQR…KCPVPFCLNI (82 aa)) form a TAZ-type 2 zinc finger. Residues 1875 to 1960 (TRNVPQQSLP…QPPPAAVEAA (86 aa)) form a disordered region. 2 stretches are compositionally biased toward pro residues: residues 1901-1913 (PQTP…PQPS) and 1944-1955 (PAPPPPAQPPPA). 3 positions are modified to phosphoserine: Ser2064, Ser2077, and Ser2080. The segment at 2112-2421 (NQPGMQPQPG…LNTPNRSALS (310 aa)) is disordered. 4 stretches are compositionally biased toward low complexity: residues 2113–2138 (QPGM…HQQP), 2197–2217 (QLLQ…QQQQ), 2261–2280 (MGQM…PGLG), and 2287–2305 (IQQA…KQQI). 2 stretches are compositionally biased toward polar residues: residues 2315–2327 (SPQQ…QPQA) and 2334–2343 (QIATSLSNQV). Pro residues predominate over residues 2349 to 2372 (VQSPRPQSQPPHSSPSPRIQPQPS). Residue Ser2351 is modified to Phosphoserine. Positions 2411–2421 (QLNTPNRSALS) are enriched in polar residues.

In terms of assembly, part of a complex composed of MSX3, CREBBP/CBP AND EP300/p300; the interaction with MSX3 decreases histone acetylation activity. Found in a complex containing NCOA2; NCOA3; IKKA; IKKB and IKBKG. Probably part of a complex with HIF1A and EP300. Interacts with phosphorylated CREB1. Interacts with the C-terminal region of CITED4. The TAZ-type 1 domain interacts with HIF1A. Interacts with SRCAP, CARM1, ELF3, MLLT7/FOXO4, N4BP2, NCOA1, NCOA3, NCOA6, PCAF, DDX5, DDX17, PELP1, PML, SMAD1, SMAD2, SMAD3, SPIB, TRERF1 and ZCCHC12. Interacts with KLF1; the interaction results in acetylation and enhancement of transcriptional activity of KLF1. Interacts with DAXX; the interaction is dependent on CBP sumoylation and results in suppression of the transcriptional activity via recruitment of HDAC2 to DAXX. Interacts with MAF. Interacts with MTDH. Interacts with MAFG; the interaction acetylates MAFG in the basic region and stimulates NFE2 transcriptional activity through increasing its DNA-binding activity. Interacts with IRF2; the interaction acetylates IRF2 and regulates its activity on the H4 promoter. Interacts (via N-terminus) with SS18L1/CREST (via C-terminus). Interacts with IRF3 (when phosphorylated); forming the dsRNA-activated factor 1 (DRAF1), a complex which activates the transcription of the type I interferon genes. Interacts with MECOM. Interacts with CITED1 (via C-terminus) Interacts with GATA1; the interaction results in acetylation and enhancement of transcriptional activity of GATA1. Interacts with FOXO1; the interaction acetylates FOXO1 and inhibits its transcriptional activity. Interacts with NPAS2, CLOCK and BMAL1. Interacts with ASF1A and ASF1B; this promotes histone acetylation. Interacts with acetylated TP53/p53 and with the acetylated histones H3 and H4. Interacts (via transactivation domain and C-terminus) with PCNA; the interaction occurs on chromatin in UV-irradiated damaged cells. Interacts with DHX9 (via N-terminus); this interaction mediates association with RNA polymerase II holoenzyme and stimulates CREB-dependent transcriptional activation. Interacts with SMAD4; negatively regulated by ZBTB7A. Forms a complex with KMT2A and CREB1. Interacts with DDX3X; this interaction may facilitate HNF4A acetylation. Interacts with MSX1; the interaction may inhibit MSX1 autoinactivation. Interacts with MSX3. Interacts with ACSS2. Methylation of the KIX domain by CARM1 blocks association with CREB. This results in the blockade of CREB signaling, and in activation of apoptotic response. In terms of processing, phosphorylated by CHUK/IKKA at Ser-1383 and Ser-1387; these phosphorylations promote cell growth by switching the binding preference of CREBBP from TP53 to NF-kappa-B. Post-translationally, sumoylation negatively regulates transcriptional activity via the recruitment of DAAX. Autoacetylation is required for binding to protein substrates, such as acetylated histones and acetylated TP53/p53. Autoacetylation is induced by glucose and fatty acids. Expressed in hypothalamus and cortex.

The protein localises to the cytoplasm. Its subcellular location is the nucleus. It catalyses the reaction L-lysyl-[histone] + acetyl-CoA = N(6)-acetyl-L-lysyl-[histone] + CoA + H(+). The enzyme catalyses L-lysyl-[protein] + acetyl-CoA = N(6)-acetyl-L-lysyl-[protein] + CoA + H(+). It carries out the reaction (S)-lactoyl-CoA + L-lysyl-[protein] = N(6)-[(S)-lactoyl]-L-lysyl-[protein] + CoA + H(+). Acetylates histones, giving a specific tag for transcriptional activation. Mediates acetylation of histone H3 at 'Lys-18' and 'Lys-27' (H3K18ac and H3K27ac, respectively). Also acetylates non-histone proteins, like DDX21, FBL, IRF2, MAFG, NCOA3, POLR1E/PAF53 and FOXO1. Binds specifically to phosphorylated CREB and enhances its transcriptional activity toward cAMP-responsive genes. Acts as a coactivator of ALX1. Acts as a circadian transcriptional coactivator which enhances the activity of the circadian transcriptional activators: NPAS2-BMAL1 and CLOCK-BMAL1 heterodimers. Acetylates PCNA; acetylation promotes removal of chromatin-bound PCNA and its degradation during nucleotide excision repair (NER). Acetylates POLR1E/PAF53, leading to decreased association of RNA polymerase I with the rDNA promoter region and coding region. Acetylates DDX21, thereby inhibiting DDX21 helicase activity. Acetylates FBL, preventing methylation of 'Gln-105' of histone H2A (H2AQ104me). In addition to protein acetyltransferase, can use different acyl-CoA substrates, such as lactoyl-CoA, and is able to mediate protein lactylation. Catalyzes lactylation of MRE11 in response to DNA damage, thereby promoting DNA double-strand breaks (DSBs) via homologous recombination (HR). Functions as a transcriptional coactivator for SMAD4 in the TGF-beta signaling pathway. This is Histone lysine acetyltransferase CREBBP (Crebbp) from Rattus norvegicus (Rat).